A 505-amino-acid polypeptide reads, in one-letter code: Ribose import ATP-binding protein RbsA (505 aa).

2 consecutive ABC transporter domains span residues 12 to 249 (LQMK…VGRK) and 259 to 504 (VKKG…VAFS). 44 to 51 (GENGAGKS) lines the ATP pocket.

This sequence belongs to the ABC transporter superfamily. Ribose importer (TC 3.A.1.2.1) family. The complex is composed of an ATP-binding protein (RbsA), two transmembrane proteins (RbsC) and a solute-binding protein (RbsB).

Its subcellular location is the cell membrane. It catalyses the reaction D-ribose(out) + ATP + H2O = D-ribose(in) + ADP + phosphate + H(+). Functionally, part of the ABC transporter complex RbsABC involved in ribose import. Responsible for energy coupling to the transport system. The chain is Ribose import ATP-binding protein RbsA from Clostridium tetani (strain Massachusetts / E88).